The primary structure comprises 1377 residues: Dicer-like protein 2 (1377 aa).

The Helicase ATP-binding domain maps to 23-203 (MFEASLQENI…LSMIESNMNA (181 aa)). 36–43 (MDTGSGKT) contacts ATP. The DEAH box signature appears at 144–147 (DEAH). Residues 367-544 (KLEALISFLS…ALALETMAEV (178 aa)) enclose the Helicase C-terminal domain. A Dicer dsRNA-binding fold domain is found at 563 to 657 (AVARLHHFCS…LPLTRKPELR (95 aa)). 2 consecutive RNase III domains span residues 916-1056 (ATRL…MDGG) and 1090-1274 (NDSL…VDSR). Residues glutamate 1129, aspartate 1260, and glutamate 1263 each coordinate Mg(2+).

Belongs to the helicase family. Dicer subfamily. Mg(2+) is required as a cofactor. Mn(2+) serves as cofactor.

Dicer-like endonuclease involved in cleaving double-stranded RNA in the RNA interference (RNAi) pathway. Produces 21 to 25 bp dsRNAs (siRNAs) which target the selective destruction of homologous RNAs leading to sequence-specific suppression of gene expression, called post-transcriptional gene silencing (PTGS). Part of a broad host defense response against viral infection and transposons. This is Dicer-like protein 2 (dcl2) from Aspergillus terreus (strain NIH 2624 / FGSC A1156).